The primary structure comprises 538 residues: T-complex protein 1 subunit epsilon (538 aa).

It belongs to the TCP-1 chaperonin family. As to quaternary structure, heterooligomeric complex of about 850 to 900 kDa that forms two stacked rings, 12 to 16 nm in diameter.

Its subcellular location is the cytoplasm. Molecular chaperone; assists the folding of proteins upon ATP hydrolysis. Known to play a role, in vitro, in the folding of actin and tubulin. This is T-complex protein 1 subunit epsilon (cct5) from Dictyostelium discoideum (Social amoeba).